Consider the following 396-residue polypeptide: 1-deoxy-D-xylulose 5-phosphate reductoisomerase (396 aa).

Threonine 13, glycine 14, serine 15, isoleucine 16, and asparagine 127 together coordinate NADPH. Position 128 (lysine 128) interacts with 1-deoxy-D-xylulose 5-phosphate. Glutamate 129 provides a ligand contact to NADPH. A Mn(2+)-binding site is contributed by aspartate 153. Residues serine 154, glutamate 155, serine 184, and histidine 207 each coordinate 1-deoxy-D-xylulose 5-phosphate. Glutamate 155 contributes to the Mn(2+) binding site. Residue glycine 213 coordinates NADPH. The 1-deoxy-D-xylulose 5-phosphate site is built by serine 220, asparagine 225, lysine 226, and glutamate 229. Residue glutamate 229 coordinates Mn(2+).

The protein belongs to the DXR family. Mg(2+) serves as cofactor. It depends on Mn(2+) as a cofactor.

It catalyses the reaction 2-C-methyl-D-erythritol 4-phosphate + NADP(+) = 1-deoxy-D-xylulose 5-phosphate + NADPH + H(+). It functions in the pathway isoprenoid biosynthesis; isopentenyl diphosphate biosynthesis via DXP pathway; isopentenyl diphosphate from 1-deoxy-D-xylulose 5-phosphate: step 1/6. Functionally, catalyzes the NADPH-dependent rearrangement and reduction of 1-deoxy-D-xylulose-5-phosphate (DXP) to 2-C-methyl-D-erythritol 4-phosphate (MEP). The chain is 1-deoxy-D-xylulose 5-phosphate reductoisomerase from Pseudomonas putida (strain W619).